Consider the following 293-residue polypeptide: Hydroxyquinol 1,2-dioxygenase (293 aa).

Fe cation is bound by residues Tyr-164, Tyr-197, His-221, and His-223.

The protein belongs to the intradiol ring-cleavage dioxygenase family. As to quaternary structure, homodimer. Fe(3+) is required as a cofactor.

It catalyses the reaction benzene-1,2,4-triol + O2 = maleylacetate + 2 H(+). Its pathway is aromatic compound metabolism; beta-ketoadipate pathway; 3-oxoadipate from 3,4-dihydroxybenzoate: step 2/4. With respect to regulation, inhibited by 3,5-dichlorocatechol, chlorohydroquinone and 4,5-dibromocatechol. Functionally, catalyzes the ortho-cleavage of the aromatic ring of hydroxyquinol. The chain is Hydroxyquinol 1,2-dioxygenase (chqB) from Nocardioides simplex (Arthrobacter simplex).